The following is a 431-amino-acid chain: MANSC domain-containing protein 1 (431 aa).

The first 26 residues, methionine 1–serine 26, serve as a signal peptide directing secretion. The Extracellular segment spans residues glutamine 27–leucine 385. Asparagine 31 is a glycosylation site (N-linked (GlcNAc...) asparagine). Residues serine 33–tyrosine 117 enclose the MANSC domain. N-linked (GlcNAc...) asparagine glycans are attached at residues asparagine 222 and asparagine 251. The disordered stretch occupies residues histidine 236–proline 279. Residues threonine 250–alanine 265 are compositionally biased toward polar residues. Positions threonine 266 to proline 279 are enriched in low complexity. Asparagine 327 and asparagine 352 each carry an N-linked (GlcNAc...) asparagine glycan. The segment at asparagine 352–valine 372 is disordered. A helical transmembrane segment spans residues leucine 386–leucine 408. Residues serine 409–isoleucine 431 lie on the Cytoplasmic side of the membrane.

It is found in the membrane. This Macaca fascicularis (Crab-eating macaque) protein is MANSC domain-containing protein 1 (MANSC1).